The primary structure comprises 1613 residues: NAD-specific glutamate dehydrogenase (1613 aa).

Lys-849 is a catalytic residue.

The protein belongs to the Glu/Leu/Phe/Val dehydrogenases family.

It carries out the reaction L-glutamate + NAD(+) + H2O = 2-oxoglutarate + NH4(+) + NADH + H(+). Its function is as follows. Involved in arginine catabolism by converting L-glutamate, into 2-oxoglutarate, which is then channeled into the tricarboxylic acid cycle. This chain is NAD-specific glutamate dehydrogenase, found in Halomonas elongata (strain ATCC 33173 / DSM 2581 / NBRC 15536 / NCIMB 2198 / 1H9).